A 415-amino-acid chain; its full sequence is Actin-like protein 7B (415 aa).

A disordered region spans residues 1–31 (MATRNSPMPLGTAQGDPGEAGTRPGPDASLR). At serine 6 the chain carries Phosphoserine.

The protein belongs to the actin family. Detected only in the testis and, to a lesser extent, in the prostate.

The protein localises to the cytoplasm. Its subcellular location is the cytoskeleton. The protein is Actin-like protein 7B (ACTL7B) of Homo sapiens (Human).